The primary structure comprises 406 residues: Vacuole membrane protein 1 (406 aa).

A compositionally biased stretch (basic and acidic residues) spans 1–21 (MAENGKNCDQRRVAMNKEHHN). A disordered region spans residues 1–35 (MAENGKNCDQRRVAMNKEHHNGNFTDPSSVNEKKR). N-acetylalanine is present on Ala2. Topologically, residues 2 to 43 (AENGKNCDQRRVAMNKEHHNGNFTDPSSVNEKKRREREERQN) are cytoplasmic. Residues 44 to 64 (IVLWRQPLITLQYFSLEILVI) form a helical membrane-spanning segment. Over 65 to 77 (LKEWTSKLWHRQS) the chain is Extracellular. A helical transmembrane segment spans residues 78–98 (IVVSFLLLLAVLIATYYVEGV). Topologically, residues 99–109 (HQQYVQRIEKQ) are cytoplasmic. A helical transmembrane segment spans residues 110 to 130 (FLLYAYWIGLGILSSVGLGTG). At 131–250 (LHTFLLYLGP…ASRAKLAVQK (120 aa)) the chain is on the extracellular side. A VTT domain region spans residues 173 to 316 (GTEGTISLWS…FVIITFSKHI (144 aa)). Residues 251 to 271 (LVQKVGFFGILACASIPNPLF) traverse the membrane as a helical segment. At 272–273 (DL) the chain is on the cytoplasmic side. Residues 274–294 (AGITCGHFLVPFWTFFGATLI) form a helical membrane-spanning segment. Residues 295 to 305 (GKAIIKMHIQK) are Extracellular-facing. Residues 306–326 (IFVIITFSKHIVEQMVAFIGA) traverse the membrane as a helical segment. Over 327 to 363 (VPGIGPSLQKPFQEYLEAQRQKLHHKSEMGTPQGENW) the chain is Cytoplasmic. A helical transmembrane segment spans residues 364–384 (LSWMFEKLVVVMVCYFILSII). The Extracellular segment spans residues 385–406 (NSMAQSYAKRIQQRLNSEEKTK).

This sequence belongs to the VMP1 family. Interacts with BECN1. Interacts with TJP1. Interacts with TP53INP2. Interacts with TMEM41B. Interacts with ATP2A2, PLN and SLN; competes with PLN and SLN to prevent them from forming an inhibitory complex with ATP2A2. Interacts with ATG2A.

The protein resides in the endoplasmic reticulum-Golgi intermediate compartment membrane. Its subcellular location is the cell membrane. It localises to the vacuole membrane. It is found in the endoplasmic reticulum membrane. It carries out the reaction a 1,2-diacyl-sn-glycero-3-phospho-L-serine(in) = a 1,2-diacyl-sn-glycero-3-phospho-L-serine(out). The catalysed reaction is cholesterol(in) = cholesterol(out). It catalyses the reaction a 1,2-diacyl-sn-glycero-3-phosphocholine(in) = a 1,2-diacyl-sn-glycero-3-phosphocholine(out). The enzyme catalyses a 1,2-diacyl-sn-glycero-3-phosphoethanolamine(in) = a 1,2-diacyl-sn-glycero-3-phosphoethanolamine(out). Its function is as follows. Phospholipid scramblase involved in lipid homeostasis and membrane dynamics processes. Has phospholipid scramblase activity toward cholesterol and phosphatidylserine, as well as phosphatidylethanolamine and phosphatidylcholine. Required for autophagosome formation: participates in early stages of autophagosome biogenesis at the endoplasmic reticulum (ER) membrane by reequilibrating the leaflets of the ER as lipids are extracted by ATG2 (ATG2A or ATG2B) to mediate autophagosome assembly. Regulates ATP2A2 activity to control ER-isolation membrane contacts for autophagosome formation. In addition to autophagy, involved in other processes in which phospholipid scramblase activity is required. Modulates ER contacts with lipid droplets, mitochondria and endosomes. Plays an essential role in formation of cell junctions. Upon stress such as bacterial and viral infection, promotes formation of cytoplasmic vacuoles followed by cell death. Involved in the cytoplasmic vacuolization of acinar cells during the early stage of acute pancreatitis. Functionally, (Microbial infection) Host factor required for infection by all flaviviruses tested such as Zika virus and Yellow fever virus. Probably required post-entry of the virus to facilitate the ER membrane remodeling necessary to form replication organelles. The sequence is that of Vacuole membrane protein 1 from Homo sapiens (Human).